We begin with the raw amino-acid sequence, 6668 residues long: Centrosome-associated protein CEP250 (6668 aa).

Coiled coils occupy residues 562 to 589, 632 to 666, 873 to 988, 1042 to 1087, 1252 to 1307, 1333 to 1427, 1501 to 1538, 1594 to 1688, 1896 to 1930, 1975 to 2224, 2298 to 3272, 3298 to 3436, 3526 to 3599, 3697 to 3773, 3856 to 4137, 4170 to 4486, 4515 to 5078, 5165 to 5202, 5298 to 5731, and 5927 to 6119; these read KAFHEAQLARAREETKTLRQKIAALQQD, TRELTERLQAALAVNESLREELLEARQQLSLLRAS, HTEC…LRSS, LRMS…HEAA, VEDL…AVSR, LESL…LEKK, RPAAEEAVERETNLKKELEAAHQQKNEAEEMCKELGTQ, REAL…SEVA, HDILVGRVEELERMQTELEEQRRMLTKHLQQTTEK, EETL…AKQS, AEDE…LKME, QQEL…SRAE, LVQL…AKEE, CASL…EERR, TEML…VEAE, RRKL…LRER, LETL…FRRR, LASLGQELEEERWQVKQLQELLKEVDSARKEALEQETL, LREK…QHRV, and TQAL…LWRQ.

Post-translationally, proteolytically cleaved; only the full-length form localizes to the inner core, while processed version also localizes to the outer core during the onset of cell division.

The protein localises to the cytoplasm. The protein resides in the cytoskeleton. It localises to the microtubule organizing center. It is found in the centrosome. Functionally, part of the centrosome inner core complex. Required for the linking of centrosomal inner and outer cores. In Toxoplasma gondii (strain ATCC 50611 / Me49), this protein is Centrosome-associated protein CEP250.